Consider the following 81-residue polypeptide: Large ribosomal subunit protein uL29c (81 aa).

It belongs to the universal ribosomal protein uL29 family.

The protein localises to the plastid. It is found in the chloroplast. This Phaeodactylum tricornutum (strain CCAP 1055/1) protein is Large ribosomal subunit protein uL29c.